Here is a 181-residue protein sequence, read N- to C-terminus: UPF0398 protein lin2003 (181 aa).

Belongs to the UPF0398 family.

The sequence is that of UPF0398 protein lin2003 from Listeria innocua serovar 6a (strain ATCC BAA-680 / CLIP 11262).